The primary structure comprises 350 residues: Probable transposase-like protein At4g04430 (350 aa).

Disordered stretches follow at residues 1–57 (MPSD…PSVN) and 307–328 (QIGQ…QVAN). Residues 30–43 (SGVQGSGSRSGSTV) show a composition bias toward low complexity.

Belongs to the transposase 24 family.

The chain is Probable transposase-like protein At4g04430 from Arabidopsis thaliana (Mouse-ear cress).